Reading from the N-terminus, the 454-residue chain is MTKREAEELIEIEIDGTEKAECTEESIVEQTYAPAECVSQAIDINEPIGNLKKLLEPRLQCSLDAHEICLQDIQLDPERSLFDQGVKTDGTVQLSVQVISYQGIEPKLNILEIVKPADTVEVVIDPDAHHAESEAHLVEEAQVITLDGTKHITTISDETSEQVTRWAAALEGYRKEQERLGIPYDPIQWSTDQVLHWVVWVMKEFSMTDIDLTTLNISGRELCSLNQEDFFQRVPRGEILWSHLELLRKYVLASQEQQMNEIVTIDQPVQIIPASVQSATPTTIKVINSSAKAAKVQRAPRISGEDRSSPGNRTGNNGQIQLWQFLLELLTDKDARDCISWVGDEGEFKLNQPELVAQKWGQRKNKPTMNYEKLSRALRYYYDGDMICKVQGKRFVYKFVCDLKTLIGYSAAELNRLVTECEQKKLAKMQLHGIAQPVTAVALATASLQTEKDN.

Residues 168 to 251 form the PNT domain; sequence AALEGYRKEQ…SHLELLRKYV (84 aa). Positions 297–316 are disordered; it reads QRAPRISGEDRSSPGNRTGN. S303 carries the post-translational modification Phosphoserine. A DNA-binding region (ETS) is located at residues 320-400; that stretch reads IQLWQFLLEL…QGKRFVYKFV (81 aa).

This sequence belongs to the ETS family. Heterotetramer of two alpha and two beta subunits.

The protein localises to the nucleus. In terms of biological role, transcription factor capable of interacting with purine rich repeats (GA repeats). Positively regulates transcription of transcriptional repressor RHIT/ZNF205. Functionally, (Microbial infection) Necessary for the expression of the Adenovirus E4 gene. The protein is GA-binding protein alpha chain (GABPA) of Homo sapiens (Human).